Consider the following 323-residue polypeptide: Formyltetrahydrofolate deformylase 1, mitochondrial (323 aa).

The transit peptide at 1–25 directs the protein to the mitochondrion; sequence MIRRITERASGFAKNIPILKSSRFH. An ACT domain is found at 41 to 124; sequence VHVFHCQDAV…SVVRVPSIDP (84 aa). Asp-267 is a catalytic residue.

This sequence belongs to the PurU family. As to expression, expressed in leaves, cotyledons, roots, seeds and flowers.

The protein localises to the mitochondrion. The enzyme catalyses (6R)-10-formyltetrahydrofolate + H2O = (6S)-5,6,7,8-tetrahydrofolate + formate + H(+). Its function is as follows. Deformylase involved in photorespiration. Prevents excessive accumulation of 5-formyl tetrahydrofolate (THF), a potent inhibitor of the Gly decarboxylase/Ser hydroxymethyltransferase complex. The sequence is that of Formyltetrahydrofolate deformylase 1, mitochondrial (PURU1) from Arabidopsis thaliana (Mouse-ear cress).